We begin with the raw amino-acid sequence, 192 residues long: uncharacterized protein (192 aa).

This sequence to R.meliloti RA0936 and y4nF.

This is an uncharacterized protein from Sinorhizobium fredii (strain NBRC 101917 / NGR234).